Consider the following 433-residue polypeptide: Deoxyguanosinetriphosphate triphosphohydrolase-like protein 2 (433 aa).

Residues 61–248 (RLTHSLEVAQ…METADDIAYT (188 aa)) enclose the HD domain.

The protein belongs to the dGTPase family. Type 2 subfamily.

The protein is Deoxyguanosinetriphosphate triphosphohydrolase-like protein 2 of Deinococcus radiodurans (strain ATCC 13939 / DSM 20539 / JCM 16871 / CCUG 27074 / LMG 4051 / NBRC 15346 / NCIMB 9279 / VKM B-1422 / R1).